A 314-amino-acid polypeptide reads, in one-letter code: DNA-directed RNA polymerase subunit alpha (314 aa).

The interval 1-227 is alpha N-terminal domain (alpha-NTD); the sequence is MIEFQKPTIS…EHLALFIDLS (227 aa). The segment at 241-314 is alpha C-terminal domain (alpha-CTD); that stretch reads VETVMENKEP…GQSFKQETEN (74 aa).

This sequence belongs to the RNA polymerase alpha chain family. In terms of assembly, homodimer. The RNAP catalytic core consists of 2 alpha, 1 beta, 1 beta' and 1 omega subunit. When a sigma factor is associated with the core the holoenzyme is formed, which can initiate transcription.

The enzyme catalyses RNA(n) + a ribonucleoside 5'-triphosphate = RNA(n+1) + diphosphate. In terms of biological role, DNA-dependent RNA polymerase catalyzes the transcription of DNA into RNA using the four ribonucleoside triphosphates as substrates. The sequence is that of DNA-directed RNA polymerase subunit alpha from Oenococcus oeni (strain ATCC BAA-331 / PSU-1).